Here is a 334-residue protein sequence, read N- to C-terminus: Holliday junction branch migration complex subunit RuvB (334 aa).

Residues 1 to 182 form a large ATPase domain (RuvB-L) region; the sequence is MDDRMVDQSM…FGVHLRLEYY (182 aa). Residues L21, R22, G63, K66, T67, T68, 129–131, R172, Y182, and R219 contribute to the ATP site; that span reads EDF. Residue T67 participates in Mg(2+) binding. The interval 183–253 is small ATPAse domain (RuvB-S); sequence QELELKEIIV…TTRASLQLLQ (71 aa). The interval 256–334 is head domain (RuvB-H); sequence DEGLDYIDHK…HFSKKNGKKE (79 aa). DNA-binding residues include R292, R311, and R316.

The protein belongs to the RuvB family. Homohexamer. Forms an RuvA(8)-RuvB(12)-Holliday junction (HJ) complex. HJ DNA is sandwiched between 2 RuvA tetramers; dsDNA enters through RuvA and exits via RuvB. An RuvB hexamer assembles on each DNA strand where it exits the tetramer. Each RuvB hexamer is contacted by two RuvA subunits (via domain III) on 2 adjacent RuvB subunits; this complex drives branch migration. In the full resolvosome a probable DNA-RuvA(4)-RuvB(12)-RuvC(2) complex forms which resolves the HJ.

The protein resides in the cytoplasm. The enzyme catalyses ATP + H2O = ADP + phosphate + H(+). Functionally, the RuvA-RuvB-RuvC complex processes Holliday junction (HJ) DNA during genetic recombination and DNA repair, while the RuvA-RuvB complex plays an important role in the rescue of blocked DNA replication forks via replication fork reversal (RFR). RuvA specifically binds to HJ cruciform DNA, conferring on it an open structure. The RuvB hexamer acts as an ATP-dependent pump, pulling dsDNA into and through the RuvAB complex. RuvB forms 2 homohexamers on either side of HJ DNA bound by 1 or 2 RuvA tetramers; 4 subunits per hexamer contact DNA at a time. Coordinated motions by a converter formed by DNA-disengaged RuvB subunits stimulates ATP hydrolysis and nucleotide exchange. Immobilization of the converter enables RuvB to convert the ATP-contained energy into a lever motion, pulling 2 nucleotides of DNA out of the RuvA tetramer per ATP hydrolyzed, thus driving DNA branch migration. The RuvB motors rotate together with the DNA substrate, which together with the progressing nucleotide cycle form the mechanistic basis for DNA recombination by continuous HJ branch migration. Branch migration allows RuvC to scan DNA until it finds its consensus sequence, where it cleaves and resolves cruciform DNA. The protein is Holliday junction branch migration complex subunit RuvB of Staphylococcus saprophyticus subsp. saprophyticus (strain ATCC 15305 / DSM 20229 / NCIMB 8711 / NCTC 7292 / S-41).